The following is a 198-amino-acid chain: Prostamide/prostaglandin F synthase (198 aa).

Tyr108 carries the phosphotyrosine modification.

It belongs to the peroxiredoxin-like PRXL2 family. Prostamide/prostaglandin F synthase subfamily.

It localises to the cytoplasm. The protein resides in the cytosol. It carries out the reaction prostaglandin H2 + [thioredoxin]-dithiol = prostaglandin F2alpha + [thioredoxin]-disulfide. The enzyme catalyses prostamide F2alpha + [thioredoxin]-disulfide = prostamide H2 + [thioredoxin]-dithiol. In terms of biological role, catalyzes the reduction of prostaglandin-ethanolamide H(2) (prostamide H(2)) to prostamide F(2alpha) with NADPH as proton donor. Also able to reduce prostaglandin H(2) to prostaglandin F(2alpha). This chain is Prostamide/prostaglandin F synthase (PRXL2B), found in Pongo abelii (Sumatran orangutan).